A 258-amino-acid polypeptide reads, in one-letter code: MLKTRVIPCLDVKDGRVVKGVQFLALRDAGDPVEAAKAYDAAGADELCFLDITASHEARGILLDVVQRTAEACFMPLTVGGGVRSVEDIRALLLAGADKVSINTAAVNNPDFVAEAAEKFGNQCIVVAIDAKRVSGPGEAPRWEIFTHGGRRATGLDAITFARTVTARGAGELLVTSMDRDGMRSGYDLGLTRAIADAVSVPVIASGGVGGLDDLVAGVAEGHASAVLAASIFHFGEATVAQAKAHMAAAGLAMRLDP.

Residues Asp-11 and Asp-130 contribute to the active site.

It belongs to the HisA/HisF family. In terms of assembly, heterodimer of HisH and HisF.

It is found in the cytoplasm. It carries out the reaction 5-[(5-phospho-1-deoxy-D-ribulos-1-ylimino)methylamino]-1-(5-phospho-beta-D-ribosyl)imidazole-4-carboxamide + L-glutamine = D-erythro-1-(imidazol-4-yl)glycerol 3-phosphate + 5-amino-1-(5-phospho-beta-D-ribosyl)imidazole-4-carboxamide + L-glutamate + H(+). It functions in the pathway amino-acid biosynthesis; L-histidine biosynthesis; L-histidine from 5-phospho-alpha-D-ribose 1-diphosphate: step 5/9. Its function is as follows. IGPS catalyzes the conversion of PRFAR and glutamine to IGP, AICAR and glutamate. The HisF subunit catalyzes the cyclization activity that produces IGP and AICAR from PRFAR using the ammonia provided by the HisH subunit. The protein is Imidazole glycerol phosphate synthase subunit HisF of Methylobacterium sp. (strain 4-46).